Here is a 173-residue protein sequence, read N- to C-terminus: MRRAFYIGRFQPFHLGHYSLIKDIARDADEVVIGIGSAQKSHEPKNPFTAGERVMMIKHALEDAGIKHYAIPLEDLQRNAVWVSHIISMTPPFDVVYSNNPLVVRLFQESGILVEQPPMYQREGYSGSEIRKRMLRGEDWKSLVPAAVIDVIDEIDGVNRLKSVSKSDKDYRD.

This sequence belongs to the archaeal NMN adenylyltransferase family.

The protein resides in the cytoplasm. It catalyses the reaction beta-nicotinamide D-ribonucleotide + ATP + H(+) = diphosphate + NAD(+). The protein operates within cofactor biosynthesis; NAD(+) biosynthesis; NAD(+) from nicotinamide D-ribonucleotide: step 1/1. The protein is Nicotinamide-nucleotide adenylyltransferase (ffdC) of Methanolobus tindarius.